The primary structure comprises 134 residues: Fluoride-specific ion channel FluC 2 (134 aa).

The next 4 helical transmembrane spans lie at 10–30 (LSAE…GALL), 43–63 (LLVN…PAAP), 67–87 (LLVG…MVDA), and 100–120 (FGLI…GFWL). Residues Gly-75 and Thr-78 each coordinate Na(+).

This sequence belongs to the fluoride channel Fluc/FEX (TC 1.A.43) family.

Its subcellular location is the cell inner membrane. It catalyses the reaction fluoride(in) = fluoride(out). Its activity is regulated as follows. Na(+) is not transported, but it plays an essential structural role and its presence is essential for fluoride channel function. In terms of biological role, fluoride-specific ion channel. Important for reducing fluoride concentration in the cell, thus reducing its toxicity. The polypeptide is Fluoride-specific ion channel FluC 2 (Synechococcus sp. (strain CC9902)).